Reading from the N-terminus, the 97-residue chain is Small ribosomal subunit protein bS6 (97 aa).

Belongs to the bacterial ribosomal protein bS6 family.

Functionally, binds together with bS18 to 16S ribosomal RNA. The protein is Small ribosomal subunit protein bS6 of Syntrophomonas wolfei subsp. wolfei (strain DSM 2245B / Goettingen).